The primary structure comprises 509 residues: Monofunctional riboflavin biosynthesis protein RIBA 3, chloroplastic (509 aa).

The transit peptide at methionine 1–lysine 43 directs the protein to the chloroplast. The interval alanine 44–lysine 302 is inactive DHBP synthase. Residues glycine 125–aspartate 126 and arginine 240–threonine 244 contribute to the D-ribulose 5-phosphate site. Residues arginine 303–alanine 509 are GTP cyclohydrolase II. Arginine 353–glutamate 357 serves as a coordination point for GTP. Zn(2+) contacts are provided by cysteine 358, cysteine 369, and cysteine 371. Residues glutamine 374, glutamate 397 to arginine 399, and threonine 419 each bind GTP. Catalysis depends on aspartate 431, which acts as the Proton acceptor; for GTP cyclohydrolase activity. The Nucleophile; for GTP cyclohydrolase activity role is filled by arginine 433. The GTP site is built by threonine 454 and lysine 459.

The protein in the N-terminal section; belongs to the DHBP synthase family. It in the C-terminal section; belongs to the GTP cyclohydrolase II family. It depends on Zn(2+) as a cofactor. Expressed in leaves, shoots, roots, flowers and siliques.

The protein resides in the plastid. It is found in the chloroplast. The catalysed reaction is GTP + 4 H2O = 2,5-diamino-6-hydroxy-4-(5-phosphoribosylamino)-pyrimidine + formate + 2 phosphate + 3 H(+). It functions in the pathway cofactor biosynthesis; riboflavin biosynthesis; 5-amino-6-(D-ribitylamino)uracil from GTP: step 1/4. Involved in riboflavin biosynthesis. Catalyzes the conversion of GTP to 2,5-diamino-6-ribosylamino-4(3H)-pyrimidinone 5'-phosphate (DARP), formate and pyrophosphate. RIBA2 and RIBA3 together are not able to complement the loss of function of RIBA1. This Arabidopsis thaliana (Mouse-ear cress) protein is Monofunctional riboflavin biosynthesis protein RIBA 3, chloroplastic (RIBA3).